We begin with the raw amino-acid sequence, 490 residues long: Probable G-protein coupled receptor npr-8 (490 aa).

Topologically, residues 1 to 55 are extracellular; it reads MEVKDIDNYCDRGISPNASNYLTYPFDGLCLQKFFYQLQTSLRRFTPYEEIIYTT. Asn17 carries N-linked (GlcNAc...) asparagine glycosylation. The chain crosses the membrane as a helical span at residues 56–76; it reads VYIIISVAAVIGNGLVIMAVV. At 77–86 the chain is on the cytoplasmic side; it reads RKKTMRTNRN. Residues 87 to 107 form a helical membrane-spanning segment; that stretch reads VLILNLALSNLILAITNIPFL. Residues 108–125 are Extracellular-facing; that stretch reads WLPSIDFEFPYSRFFCKF. Residues 126-146 traverse the membrane as a helical segment; sequence ANVLPGSNIYCSTLTISVMAI. Residues 147-166 lie on the Cytoplasmic side of the membrane; it reads DRYYSVKKLKIASNRKQCFH. The helical transmembrane segment at 167–187 threads the bilayer; the sequence is AVLVSLAIWIVSFILSLPLLL. Residues 188 to 236 lie on the Extracellular side of the membrane; it reads YYETSMLYVMREIRVVDQSGQEVIRSYGWRQCRLVSAGRLPDITQSIQL. A helical transmembrane segment spans residues 237–257; that stretch reads LMSILQVAFLYIVPLFVLSIF. The Cytoplasmic segment spans residues 258 to 331; sequence NVKLTRFLKT…QRTNRTTSLL (74 aa). The segment at 272–322 is disordered; it reads MSKTRAPPKRFDRSDSHHNSLKNNNNHTSSLRSPSMPSIRSSITERNKTNQ. Residues 280-289 are compositionally biased toward basic and acidic residues; that stretch reads KRFDRSDSHH. Over residues 292–313 the composition is skewed to low complexity; it reads LKNNNNHTSSLRSPSMPSIRSS. Residues 332-352 form a helical membrane-spanning segment; that stretch reads IAMAGSYAALWFPFTLITFLI. The Extracellular segment spans residues 353–374; the sequence is DFELIINQDYVNLVERIDQTCK. Residues 375–395 traverse the membrane as a helical segment; that stretch reads MVSMLSICVNPFLYGFLNTNF. The Cytoplasmic segment spans residues 396-490; it reads RHEFSDIYYR…DDDIEKDSFV (95 aa).

It belongs to the G-protein coupled receptor 1 family.

It is found in the cell membrane. Not known. Putative receptor. The sequence is that of Probable G-protein coupled receptor npr-8 from Caenorhabditis elegans.